Consider the following 336-residue polypeptide: MSQPLNVAVVGATGSVGEALVGLLDERDFPLHRLHLLASAESAGQRMGFAESSLRVGDVDSFDFSSVGLAFFAAAAEVSRAHAERARAAGCSVIDLSGALEPSVAPPVMVSVNAERLASQAAPFLLSSPCAVAAELCEVLAPLLATLDCRQLNLTACLSVSSLGREGVKELARQTAELLNARPLEPRLFDRQIAFNLLAQVGAVDAEGHSAIERRIFAEVQALLGERIGPLNVTCIQAPVFFGDSLSVTLQCAEPVDLAAVTRVLDATKGIEWVGEGDYPTVVGDALGQDETYVGRVRAGQADPCQVNLWIVSDNVRKGAALNAVLLGELLIKHYL.

The protein belongs to the aspartate-semialdehyde dehydrogenase family.

The polypeptide is USG-1 protein homolog (usg) (Pseudomonas aeruginosa (strain ATCC 15692 / DSM 22644 / CIP 104116 / JCM 14847 / LMG 12228 / 1C / PRS 101 / PAO1)).